The following is a 99-amino-acid chain: Accessory protein p12I (99 aa).

Residues 3-23 form a helical membrane-spanning segment; sequence FRLLSPLSPLALTALLLFLLP. 2 short sequence motifs (SH3-binding) span residues 4–11 and 33–38; these read RLLSPLSP and RPPPAP. Residues 48–68 traverse the membrane as a helical segment; the sequence is ILSGLLFLLFLPLFFSLPLLL. Short sequence motifs (SH3-binding) lie at residues 70–77 and 88–93; these read PSLPITMR and KAPSQP. Lysine 88 participates in a covalent cross-link: Glycyl lysine isopeptide (Lys-Gly) (interchain with G-Cter in ubiquitin); in isolate LAF.

Belongs to the HTLV-1 accessory protein p12I family. As to quaternary structure, p12I is a homodimer. Interacts with human CANX, CALR, ATP6V0C, IL2RB, IL2RG. Binds to MHC-I heavy chains HLA-A2, HLA-B7 and HLA-Cw4. Post-translationally, ubiquitinated; a fraction of P12I is degraded via the ubiquitin system.

The protein localises to the host endoplasmic reticulum membrane. The protein resides in the host Golgi apparatus. It is found in the host cis-Golgi network membrane. Its function is as follows. p12I is a modulator of T-lymphocyte proliferation and immune function and may contribute to establish a persistent infection. Binds and down-modulates cell surface expression of interleukin-2 receptors IL2RB and IL2RG. Also down-modulates cell surface MHC-I molecules by binding to free immature MHC-I heavy chains in the ER and targeting them to the proteasome for degradation. Binding to IL2RB mediates recruitment of JAK1 and JAK3. As a result of this interaction, p12I increases DNA-binding and transcriptional activity of STAT5. In Homo sapiens (Human), this protein is Accessory protein p12I.